Consider the following 185-residue polypeptide: Somatotropin (185 aa).

C52 and C158 form a disulfide bridge. Residue E167 participates in Zn(2+) binding. Cysteines 175 and 183 form a disulfide.

The protein belongs to the somatotropin/prolactin family.

The protein resides in the secreted. Its function is as follows. Growth hormone plays an important role in growth control and is involved in the regulation of several anabolic processes. Implicated as an osmoregulatory substance important for seawater adaptation. This chain is Somatotropin (gh), found in Katsuwonus pelamis (Skipjack tuna).